The primary structure comprises 1337 residues: MTVDNSQIPNLNQPESFADLWDGYENVSKATEKGVLLLKDITKFFKKRIQSEDEYSKTLSKLVLKFEPMAPDGYIGPRLKNTWDQIKLETLTHSNHHENICNNISTHIIEPIEGLIVDLEQKMKSIHVDAEKSFIHYQESVAKLKKAKQNYDRLCKDSFEITGVSKGETQKVQKRAIKAAQDVIKADKDYRAQINETNTSQKQFLTELIPKIMNDLQRLEMVRIHMVKSYFHRYFKSMESTPQKFNTETENLLNLINSINNEDEIQDFVRKSKTTHKYPKPFEYEPYLDRFTTPPPPPPPQISSPQLLSPRGDISIQHSSSSNSLPIFPTQHQLLSNKEKADNNITNSLSLSSDSLQTNLNNGNNGGNGNNGSNTPTKEKKPSSWGLKRFSTSVSSTSDRKLLNKQIQSIGLAHNGGNIFNCKIEDIMVAQKKKYPYLEIPFIVVFLKHKLVALDVFKTQGIFRVPGNVVDINSLKKRFDEGNYEVAPTENVYTIASLLKLWLREITEPLFPLTVYDQCIENSNKREKIFEIISSLPILNQKTISYIIELLQECGKSVNVEHNKMNFPNLAMVFSPCFLRCSHTDPNILLGNIFKEKEFVQNIIEHFKPLQVNDSLEGPPSSSSSSSTSINQSSIESPPTSPLRSSTNSNANKSSTPIKPSSPSQQQQQQQQQQQSSTPSTPLSSTTNTNVKHNILSPIVEQQSPNNGKQPIALTQTYSHLNIGSVPLIINTVNNNNQNQNQNQNQNQNQDQNQNQSKQPIQSSNQTQQQVSAPATPHTVAVNPKINQIKAETITTPQKSIGDGNGLIGQSPSAHLMSPSEVKRRSNAIYLEDQERCKQRIDELHTQVNELYSDITTIETTTYFAMQSSLLITKLTKSLESFLTIDMWNLTLQDIKEAIEKNKFVSPPPINFKIPSKMPKLSPIELVQNEQSSELLRSWLSNVTLTVNRINEYLCYLGGVVIRIHSPDTLFAISNLFTDYDLSPQQNPKFVSLTLEQSTIFIQKTLALLEPLNPFTSDELNINVKVQDTITPASFSPALISDPDCNSPPTISNTTNRLLNTSGSTDFSTTPLSSSPSTSSTSLSTNNNNNNNGNRNLDINNSPTIVITNSSLNKSALSTNNNNNNNNNNNNNPTTKLSSSTSSTSTTTTTNTNTNTTTNEKIAHAIISPSSSTTSFKFDDDEDEDEDLLEINNKLHSQLTEELKKKQQQYKQLIFDIIDMIKDKKKLMNSLDLTNSDSQLDIKSIAKLSLSLKRALDNFTSESGFDIEDEQDPIINKENDSFVNLKIMTSHFISRIVLILTTILSISNEFNSTLYQLLLPFNENNNNNNENNNINNQ.

The F-BAR domain occupies 14–264; it reads PESFADLWDG…LINSINNEDE (251 aa). Disordered stretches follow at residues 279 to 328 and 345 to 392; these read PKPF…LPIF and ITNS…RFST. Positions 293 to 302 are enriched in pro residues; it reads TPPPPPPPQI. Positions 345 to 358 are enriched in polar residues; sequence ITNSLSLSSDSLQT. Residues 422 to 611 enclose the Rho-GAP domain; it reads CKIEDIMVAQ…NIIEHFKPLQ (190 aa). Disordered regions lie at residues 612 to 689, 733 to 781, and 794 to 821; these read VNDS…TTNT, VNNN…HTVA, and ITTP…SPSE. 3 stretches are compositionally biased toward low complexity: residues 621-637, 645-687, and 734-772; these read SSSS…SIES, SSTN…SSTT, and NNNN…QQVS. Positions 830–859 form a coiled coil; that stretch reads YLEDQERCKQRIDELHTQVNELYSDITTIE. Disordered stretches follow at residues 1041-1102 and 1114-1166; these read SDPD…INNS and KSAL…AHAI. Polar residues predominate over residues 1047–1063; the sequence is SPPTISNTTNRLLNTSG. Low complexity-rich tracts occupy residues 1064-1102 and 1114-1159; these read STDF…INNS and KSAL…TTTN. Residues 1189–1219 adopt a coiled-coil conformation; it reads LEINNKLHSQLTEELKKKQQQYKQLIFDIID.

Its subcellular location is the cytoplasm. It localises to the contractile vacuole. In terms of biological role, rho GTPase-activating protein involved in the signal transduction pathway. The chain is GTPase activating protein homolog 3 (mgp3) from Dictyostelium discoideum (Social amoeba).